Consider the following 455-residue polypeptide: Venom prothrombin activator notecarin-D1 (455 aa).

An N-terminal signal peptide occupies residues 1–20 (MAPQLLLCLILTFLWSLPEA). Residues 21 to 40 (ESNVFLKSKVANRFLQRTKR) constitute a propeptide that is removed on maturation. A Gla domain is found at 41–86 (SNSLFEEIRPGNIERECIEEKCSKEEAREVFEDNEKTETFWNVYVD). 4-carboxyglutamate is present on residues Glu-46, Glu-47, Glu-54, Glu-56, Glu-59, Glu-60, Glu-65, Glu-66, Glu-69, Glu-72, and Glu-75. Residues Cys-57 and Cys-62 are joined by a disulfide bond. The EGF-like 1; calcium-binding domain maps to 86-122 (DGDQCSSNPCHYRGTCKDGIGSYTCTCLPNYEGKNCE). Cystine bridges form between Cys-90-Cys-101, Cys-95-Cys-110, Cys-112-Cys-121, Cys-129-Cys-140, Cys-136-Cys-149, Cys-151-Cys-164, Cys-172-Cys-328, Cys-216-Cys-221, Cys-236-Cys-252, Cys-376-Cys-390, and Cys-401-Cys-429. O-linked (Hex...) serine glycosylation occurs at Ser-92. The EGF-like 2 domain occupies 129–164 (CRVDNGNCWHFCKRVQSETQCSCAESYRLGVDGHSC). Residues 182–209 (REASLPDFVQSQKATLLKKSDNPSPDIR) constitute a propeptide, activation peptide. The 244-residue stretch at 210 to 453 (IVNGMDCKLG…FIPWIKKIMS (244 aa)) folds into the Peptidase S1 domain. The active-site Charge relay system is the His-251. Residue Asn-254 is glycosylated (N-linked (GlcNAc...) asparagine). Residue Asp-308 is the Charge relay system of the active site. The active-site Charge relay system is Ser-405.

It belongs to the peptidase S1 family. Snake venom subfamily. Heterodimer of a light chain and a heavy chain; disulfide-linked. Gamma-carboxyglutamate residues are formed by vitamin K dependent carboxylation. These residues are essential for the binding of calcium. As to expression, expressed by the venom gland.

It localises to the secreted. It carries out the reaction Selective cleavage of Arg-|-Thr and then Arg-|-Ile bonds in prothrombin to form thrombin.. Its function is as follows. Snake prothrombin activator that attacks the hemostatic system of prey. This protein is functionally similar to blood coagulation factor Xa. The polypeptide is Venom prothrombin activator notecarin-D1 (Notechis scutatus scutatus (Mainland tiger snake)).